The chain runs to 459 residues: Putative BTB/POZ domain-containing protein R541 (459 aa).

The region spanning 76-143 is the BTB domain; it reads NHITINVGGK…NQKSTNIELY (68 aa).

This sequence belongs to the mimivirus BTB/WD family.

In Acanthamoeba polyphaga mimivirus (APMV), this protein is Putative BTB/POZ domain-containing protein R541.